The primary structure comprises 401 residues: Short chain dehydrogenase/reductase dpchH (401 aa).

Asn16 carries an N-linked (GlcNAc...) asparagine glycan. The chain crosses the membrane as a helical span at residues Val51–Leu71. NAD(+)-binding positions include Lys72–Asp80, Thr99–Gly100, and Ala118–Val120. Asn242 carries N-linked (GlcNAc...) asparagine glycosylation. The Proton acceptor role is filled by Tyr275. Residues Tyr275–Lys279 and Gly308–Ile310 each bind NAD(+). Asn386 is a glycosylation site (N-linked (GlcNAc...) asparagine).

It is found in the membrane. It functions in the pathway secondary metabolite biosynthesis; terpenoid biosynthesis. Its function is as follows. Short chain dehydrogenase/reductase; part of the gene cluster that mediates the biosynthesis of the diterpenoid pyrones higginsianins A and B. The first step of the pathway is the synthesis of the alpha-pyrone moiety by the polyketide synthase dpchA via condensation of one acetyl-CoA starter unit with 3 malonyl-CoA units and 2 methylations. The alpha-pyrone is then combined with geranylgeranyl pyrophosphate (GGPP) formed by the GGPP synthase dpchD through the action of the prenyltransferase dpchC to yield a linear alpha-pyrone diterpenoid. Subsequent steps in the diterpenoid pyrone biosynthetic pathway involve the decalin core formation, which is initiated by the epoxidation of the C10-C11 olefin by the FAD-dependent oxidoreductase dpchE, and is followed by a cyclization cascade catalyzed by the terpene cyclase dpchB. The short chain dehydrogenase/reductase dpchG then oxidizes the 8S hydroxy group to a ketone and the short chain dehydrogenase/reductase dpchH reduces the ketone to the 8R hydroxy group to yield higginsianin B. Finally, the FAD-dependent oxidoreductase dpchF converts higginsianin B into higginsianin A. The protein is Short chain dehydrogenase/reductase dpchH of Colletotrichum higginsianum (strain IMI 349063) (Crucifer anthracnose fungus).